The chain runs to 166 residues: Endoribonuclease YbeY (166 aa).

Zn(2+) is bound by residues H132, H136, and H142.

Belongs to the endoribonuclease YbeY family. Zn(2+) serves as cofactor.

The protein resides in the cytoplasm. Its function is as follows. Single strand-specific metallo-endoribonuclease involved in late-stage 70S ribosome quality control and in maturation of the 3' terminus of the 16S rRNA. In Clostridium botulinum (strain Langeland / NCTC 10281 / Type F), this protein is Endoribonuclease YbeY.